The chain runs to 1384 residues: MKAPAVLAPGILVLLFTFVQKSNGECKEALVKSRMNVNMQYQLPNFTAETSIQNVVLHKHHIYLGAINYIYVLNDKDLQKVAEYKTGPVLEHPDCFPCQDCSHKANLSGGVWKDNINMALLVDTYYDDQLISCGSVHRGTCQRHVLPPNNTADIESEVHCMYSPQADEETNQCPDCVVSALGTKVLLSEKDRFINFFVGNTINSSYLPDYILHSISVRRLKETQDGFKFLTDQSYIDVLPELRDSYPIKYVHAFESNHFIYFLTVQRETLDAQTFHTRIIRFCSADSGLHSYMEMPLECILTEKRRKRSTKQEVFNILQAAYVSKPGAQLARQIGASLNDDILYGVFAQSKPDSSEPMNRSAVCAFPVKYVNEFFNKIVNKNNVRCLQHFYGPNHEHCFNRTLLRNSSGCEVRNDEYRTEFTTALPRVDLFTGQFNQVLLTSISTFIKGDLTIANLGTSEGRFMQVVVSRSGSLTPHVNFHLDSHPVSPEVIVEHPLNQNGYTLVVTGKKITKIPLNGLGCEHFQSCSQCLSAPSFVQCGWCHDKCVRLEECSSGTWTQETCLPTIYKVFPTSAPLEGGTTLTVCGWDFGFKRNNKFDLKKTRVLLGNESCTLTLTESTTNMLKCTVGPAMNEHFNMSIVISNSRGSVEYSAFSYVDPIITSISPNYGPKTGGTLLTLTGKHLNSGNSRHISIGGKTCTLKSVSHSILECYTPAQSAPTEFSVKLKIDLANREVNSFIYREDPIVYEIHPTKSFISGGSTITGVGKNLNSVSVLRMVINVHEAGRNFTVACQHRSNSEIICCTTPSIEQLNLQLPLKTKAFFMLDGIHSKYFDLIYVHNPVFKPFEKPVMISVGNENVLEIKGNDIDPEAVKGEVLKVGNKSCENIHSHSEAVLCTVPSDLLKLNSELNIEWKQAISSTVLGKVIVQPDQNFTGLIVGVVSISIILLLLLGLFLWLKKRKQIKDLGSELVRYDARVHTPHLDRLVSARSVSPTTEMVSNESVDYRATFPEDQFPNASQNGSCRQVQYPLTDLSPILTSGDSDISSPLLQNTIHIDLSALNPELVQAVQHVVIGPSSLIVHFNEVIGRGHFGCVYHGTLLDNDDKKIHCAVKSLNRITDIGEVSQFLTEGIIMKDFSHPNVLSLLGICLRSEGSPLVVLPYMKHGDLRNFIRNETHNPTVKDLIGFGLQVAKGMEYLASKKFVHRDLAARNCMLDEKFTVKVADFGLARDVYDKEYYSVHNKTGAKLPVKWMALESLQTQKFTTKSDVWSFGVLLWELMTRGAPPYPDVNTFDITVYLLQGRRLLQPEYCPDPLYEVMLKCWHPKAELRPSFSELVSRISVIFSTFIGEHYVHVNATYVNVKCVAPYPSLLSSQDNVSGEDDDDT.

Residues 1 to 24 form the signal peptide; that stretch reads MKAPAVLAPGILVLLFTFVQKSNG. Residues 25–933 are Extracellular-facing; sequence ECKEALVKSR…VIVQPDQNFT (909 aa). Residues 27-516 enclose the Sema domain; it reads KEALVKSRMN…TGKKITKIPL (490 aa). Asn-45 carries N-linked (GlcNAc...) asparagine glycosylation. 4 cysteine pairs are disulfide-bonded: Cys-95/Cys-101, Cys-98/Cys-160, Cys-133/Cys-141, and Cys-173/Cys-176. An N-linked (GlcNAc...) asparagine glycan is attached at Asn-106. A glycan (N-linked (GlcNAc...) asparagine) is linked at Asn-149. Residues Asn-203 and Asn-359 are each glycosylated (N-linked (GlcNAc...) asparagine). Intrachain disulfides connect Cys-299/Cys-364 and Cys-386/Cys-398. Asn-400 and Asn-406 each carry an N-linked (GlcNAc...) asparagine glycan. 4 disulfides stabilise this stretch: Cys-521/Cys-539, Cys-527/Cys-562, Cys-530/Cys-546, and Cys-542/Cys-552. IPT/TIG domains lie at 564-656, 658-740, and 743-837; these read PTIY…FSYV, PIIT…FIYR, and PIVY…LIYV. Thr-583 carries O-linked (Man) threonine glycosylation. N-linked (GlcNAc...) asparagine glycans are attached at residues Asn-608 and Asn-636. Thr-677 and Thr-762 each carry an O-linked (Man) threonine glycan. Asn-786, Asn-880, and Asn-931 each carry an N-linked (GlcNAc...) asparagine glycan. The chain crosses the membrane as a helical span at residues 934 to 956; sequence GLIVGVVSISIILLLLLGLFLWL. Residues 957–1384 are Cytoplasmic-facing; the sequence is KKRKQIKDLG…NVSGEDDDDT (428 aa). Position 967 is a phosphoserine (Ser-967). The residue at position 978 (Thr-978) is a Phosphothreonine. Residues Ser-991, Ser-998, and Ser-1001 each carry the phosphoserine modification. A Phosphotyrosine modification is found at Tyr-1004. The Protein kinase domain occupies 1079–1346; it reads VHFNEVIGRG…RISVIFSTFI (268 aa). ATP-binding positions include 1085–1093 and Lys-1111; that span reads IGRGHFGCV. The Proton acceptor role is filled by Asp-1205. Residues 1213–1382 are interaction with RANBP9; sequence LDEKFTVKVA…QDNVSGEDDD (170 aa). A Phosphotyrosine modification is found at Tyr-1231. A phosphotyrosine; by autocatalysis mark is found at Tyr-1235 and Tyr-1236. Thr-1290 is subject to Phosphothreonine. The interval 1321–1360 is interaction with MUC20; the sequence is WHPKAELRPSFSELVSRISVIFSTFIGEHYVHVNATYVNV. 2 positions are modified to phosphotyrosine; by autocatalysis: Tyr-1350 and Tyr-1357. Tyr-1366 is subject to Phosphotyrosine.

It belongs to the protein kinase superfamily. Tyr protein kinase family. As to quaternary structure, heterodimer made of an alpha chain (50 kDa) and a beta chain (145 kDa) which are disulfide linked. Binds PLXNB1. Interacts when phosphorylated with downstream effectors including STAT3, PIK3R1, SRC, PCLG1, GRB2 and GAB1. Interacts with SPSB1, SPSB2 and SPSB4. Interacts with INPP5D/SHIP1. When phosphorylated at Tyr-1357, interacts with INPPL1/SHIP2. Interacts with RANBP9 and RANBP10, as well as SPSB1, SPSB2, SPSB3 and SPSB4. SPSB1 binding occurs in the presence and in the absence of HGF, however HGF treatment has a positive effect on this interaction. Interacts with MUC20; prevents interaction with GRB2 and suppresses hepatocyte growth factor-induced cell proliferation. Interacts with GRB10. Interacts with PTPN1 and PTPN2. Interacts with HSP90AA1 and HSP90AB1; the interaction suppresses MET kinase activity. Interacts with tensin TNS3. Interacts (when phosphorylated) with tensin TNS4 (via SH2 domain); the interaction increases MET protein stability by inhibiting MET endocytosis and subsequent lysosomal degradation. Autophosphorylated in response to ligand binding on Tyr-1235 and Tyr-1236 in the kinase domain leading to further phosphorylation of Tyr-1350 and Tyr-1357 in the C-terminal multifunctional docking site. Dephosphorylated by PTPRJ at Tyr-1350 and Tyr-1366. Dephosphorylated by PTPN1 and PTPN2. In terms of processing, ubiquitinated. Ubiquitination by CBL regulates the receptor stability and activity through proteasomal degradation. Post-translationally, O-mannosylation of IPT/TIG domains by TMEM260 is required for protein maturation. O-mannosylated residues are composed of single mannose glycans that are not elongated or modified. Expressed in many tissues, including liver, lung, heart, spleen and mammary gland.

It localises to the membrane. The catalysed reaction is L-tyrosyl-[protein] + ATP = O-phospho-L-tyrosyl-[protein] + ADP + H(+). In its inactive state, the C-terminal tail interacts with the catalytic domain and inhibits the kinase activity. Upon ligand binding, the C-terminal tail is displaced and becomes phosphorylated, thus increasing the kinase activity. Its function is as follows. Receptor tyrosine kinase that transduces signals from the extracellular matrix into the cytoplasm by binding to hepatocyte growth factor/HGF ligand. Regulates many physiological processes including proliferation, scattering, morphogenesis and survival. Ligand binding at the cell surface induces autophosphorylation of MET on its intracellular domain that provides docking sites for downstream signaling molecules. Following activation by ligand, interacts with the PI3-kinase subunit PIK3R1, PLCG1, SRC, GRB2, STAT3 or the adapter GAB1. Recruitment of these downstream effectors by MET leads to the activation of several signaling cascades including the RAS-ERK, PI3 kinase-AKT, or PLCgamma-PKC. The RAS-ERK activation is associated with the morphogenetic effects while PI3K/AKT coordinates prosurvival effects. During embryonic development, MET signaling plays a role in gastrulation, development and migration of muscles and neuronal precursors, angiogenesis and kidney formation. In adults, participates in wound healing as well as organ regeneration and tissue remodeling. Also promotes differentiation and proliferation of hematopoietic cells. The sequence is that of Hepatocyte growth factor receptor (MET) from Bos taurus (Bovine).